The chain runs to 447 residues: MKFDKILIANRGEIALRILRACEEMGIATIAVHSTVDRNALHVQLADEAVCIGEPASAKSYLNIPNIIAAALTRNASAIHPGYGFLSENAKFAEICADHHIAFIGPTPEAIRLMGDKSTAKETMQKAGVPTVPGSEGLVETEQEGLELAKDIGYPVMIKATAGGGGRGMRLVRSPDEFVKLFLAAQGEAGAAFGNAGVYIEKFIERPRHIEFQILADNYGNVIHLGERDCSIQRRNQKLLEEAPSPALDSDLREKMGQAAVKAAQFINYTGAGTIEFLLDRSGQFYFMEMNTRIQVEHPVTEMVTGVDLLVEQIRIAQGERLRLTQDQVVLRGHAIECRINAEDPDHDFRPAPGRISGYLPPGGPGVRIDSHVYTDYQIPPYYDSLIGKLIVWGPDRATAINRMKRALRECAITGLPTTIGFHQRIMENPQFLQGNVSTSFVQEMNK.

In terms of domain architecture, Biotin carboxylation spans 1–447; sequence MKFDKILIAN…STSFVQEMNK (447 aa). ATP contacts are provided by residues K117, K159, 165–166, 201–204, and H209; these read GG and EKFI. The region spanning 121–318 is the ATP-grasp domain; sequence KETMQKAGVP…LLVEQIRIAQ (198 aa). K238 lines the hydrogencarbonate pocket. E276 and E289 together coordinate ATP. Residues E276, E289, and N291 each contribute to the Mg(2+) site. 3 residues coordinate Mn(2+): E276, E289, and N291. Hydrogencarbonate is bound by residues R293, V296, and R339. Residue R293 is part of the active site. A biotin-binding site is contributed by R339.

As to quaternary structure, acetyl-CoA carboxylase is a heterohexamer of biotin carboxyl carrier protein, biotin carboxylase and the two subunits of carboxyl transferase in a 2:2 complex. Mg(2+) is required as a cofactor. It depends on Mn(2+) as a cofactor.

It carries out the reaction N(6)-biotinyl-L-lysyl-[protein] + hydrogencarbonate + ATP = N(6)-carboxybiotinyl-L-lysyl-[protein] + ADP + phosphate + H(+). Its pathway is lipid metabolism; malonyl-CoA biosynthesis; malonyl-CoA from acetyl-CoA: step 1/1. This protein is a component of the acetyl coenzyme A carboxylase complex; first, biotin carboxylase catalyzes the carboxylation of the carrier protein and then the transcarboxylase transfers the carboxyl group to form malonyl-CoA. The chain is Biotin carboxylase (accC) from Nostoc sp. (strain PCC 7120 / SAG 25.82 / UTEX 2576).